Consider the following 711-residue polypeptide: Progesterone receptor (711 aa).

The segment at Met1–Ile347 is modulating, Pro-Rich. NR C4-type zinc fingers lie at residues Cys348 to Cys368 and Cys384 to Cys408. Positions Cys348–Phe420 form a DNA-binding region, nuclear receptor. Residues Gln457–Ile691 form the NR LBD domain.

It belongs to the nuclear hormone receptor family. NR3 subfamily. As to expression, expressed in all tissues examined: highly expressed in testis and brain. Also expressed in heart, lung, liver, kidney, stomach and small intestine.

It localises to the nucleus. The steroid hormones and their receptors are involved in the regulation of eukaryotic gene expression and affect cellular proliferation and differentiation in target tissues. This chain is Progesterone receptor (pgr), found in Rana dybowskii (Dybovsky's frog).